The sequence spans 648 residues: Exoribonuclease 2 (648 aa).

Residues 191–518 (RIDLTYLDFI…INHRLIKSII (328 aa)) form the RNB domain. One can recognise an S1 motif domain in the interval 565–647 (KKKYQANIID…GNKKIIATMI (83 aa)).

This sequence belongs to the RNR ribonuclease family. RNase II subfamily.

It localises to the cytoplasm. It catalyses the reaction Exonucleolytic cleavage in the 3'- to 5'-direction to yield nucleoside 5'-phosphates.. Functionally, involved in mRNA degradation. Hydrolyzes single-stranded polyribonucleotides processively in the 3' to 5' direction. This Buchnera aphidicola subsp. Cinara cedri (strain Cc) protein is Exoribonuclease 2.